A 1336-amino-acid polypeptide reads, in one-letter code: Immunoglobulin superfamily member 1 (1336 aa).

Positions Met-1–Gly-28 are cleaved as a signal peptide. Residues Met-29 to Asn-518 lie on the Extracellular side of the membrane. 5 consecutive Ig-like C2-type domains span residues Pro-38 to Glu-122, Gln-137 to Ala-222, Pro-226 to Leu-312, Pro-321 to Asn-408, and Pro-419 to Glu-500. Asn-53 carries N-linked (GlcNAc...) asparagine glycosylation. The cysteines at positions 58 and 106 are disulfide-linked. A disulfide bond links Cys-248 and Cys-296. N-linked (GlcNAc...) asparagine glycans are attached at residues Asn-338, Asn-374, and Asn-381. 2 disulfide bridges follow: Cys-343-Cys-392 and Cys-441-Cys-484. A helical membrane pass occupies residues Glu-519–Ile-539. Residues Arg-540 to Gly-559 lie on the Cytoplasmic side of the membrane. Residues Val-560–Ile-580 form a helical membrane-spanning segment. Residues Glu-581–Ile-1336 are Extracellular-facing. 7 consecutive Ig-like C2-type domains span residues Thr-589 to Leu-677, Pro-686 to Lys-760, Pro-777 to Thr-869, Pro-873 to Met-958, Thr-965 to Val-1060, Pro-1065 to Asp-1150, and Pro-1161 to Asp-1242. Asn-607, Asn-747, Asn-798, Asn-846, Asn-939, Asn-986, Asn-1027, and Asn-1082 each carry an N-linked (GlcNAc...) asparagine glycan. Residues Cys-703 and Cys-750 are joined by a disulfide bond. 2 cysteine pairs are disulfide-bonded: Cys-799/Cys-849 and Cys-895/Cys-942. Cys-1087 and Cys-1134 are oxidised to a cystine. N-linked (GlcNAc...) asparagine glycans are attached at residues Asn-1147 and Asn-1223. A disulfide bond links Cys-1183 and Cys-1226. Positions Cys-1308–Ile-1336 are disordered. Polar residues predominate over residues Pro-1317–Ile-1328.

In terms of assembly, interacts with INHA. In PubMed:12385827 does not interact with INHA; standard receptor binding assay. Interacts with ACVR1B; the interaction appears to be ligand-dependent as it is diminished by inhibin B and activin A. Interacts with ACVR2A, ACVR2B, ACVRL1 and BMPR1B. Interacts with HECTD1. Highly expressed in pancreas, testis and fetal liver. Moderately expressed in heart, prostate and small intestine. Expressed at very low levels in brain, thymus, ovary, colon, fetal lung and fetal kidney. Expressed in muscle. Isoform 3 is expressed in pituitary gland.

It is found in the membrane. The protein localises to the secreted. Seems to be a coreceptor in inhibin signaling, but seems not to be a high-affinity inhibin receptor. Antagonizes activin A signaling in the presence or absence of inhibin B. Necessary to mediate a specific antagonistic effect of inhibin B on activin-stimulated transcription. The polypeptide is Immunoglobulin superfamily member 1 (IGSF1) (Homo sapiens (Human)).